Reading from the N-terminus, the 231-residue chain is Octanoyltransferase (231 aa).

The region spanning 49-227 (PHLPEAVWLL…ALAARFHLAW (179 aa)) is the BPL/LPL catalytic domain. Substrate contacts are provided by residues 91–98 (RGGEVTHH), 158–160 (AIG), and 171–173 (GLA). The active-site Acyl-thioester intermediate is cysteine 189.

The protein belongs to the LipB family.

It is found in the cytoplasm. It carries out the reaction octanoyl-[ACP] + L-lysyl-[protein] = N(6)-octanoyl-L-lysyl-[protein] + holo-[ACP] + H(+). It participates in protein modification; protein lipoylation via endogenous pathway; protein N(6)-(lipoyl)lysine from octanoyl-[acyl-carrier-protein]: step 1/2. In terms of biological role, catalyzes the transfer of endogenously produced octanoic acid from octanoyl-acyl-carrier-protein onto the lipoyl domains of lipoate-dependent enzymes. Lipoyl-ACP can also act as a substrate although octanoyl-ACP is likely to be the physiological substrate. In Parasynechococcus marenigrum (strain WH8102), this protein is Octanoyltransferase.